The following is a 289-amino-acid chain: Shikimate kinase (289 aa).

Pro84 to Ala94 serves as a coordination point for ATP.

This sequence belongs to the GHMP kinase family. Archaeal shikimate kinase subfamily.

It localises to the cytoplasm. It catalyses the reaction shikimate + ATP = 3-phosphoshikimate + ADP + H(+). The protein operates within metabolic intermediate biosynthesis; chorismate biosynthesis; chorismate from D-erythrose 4-phosphate and phosphoenolpyruvate: step 5/7. The protein is Shikimate kinase (aroK) of Methanothermobacter thermautotrophicus (strain ATCC 29096 / DSM 1053 / JCM 10044 / NBRC 100330 / Delta H) (Methanobacterium thermoautotrophicum).